The primary structure comprises 191 residues: dCTP deaminase, dUMP-forming (191 aa).

DCTP is bound by residues 101–106 (KSSLGR), Asp-119, 127–129 (TLE), Gln-148, Tyr-162, and Gln-174. Glu-129 (proton donor/acceptor) is an active-site residue. The tract at residues 163–191 (GSPVYGSRYQGQRGPTPSRSWQNFHRTKI) is disordered. The span at 171–191 (YQGQRGPTPSRSWQNFHRTKI) shows a compositional bias: polar residues.

Belongs to the dCTP deaminase family. As to quaternary structure, homotrimer.

It catalyses the reaction dCTP + 2 H2O = dUMP + NH4(+) + diphosphate. It functions in the pathway pyrimidine metabolism; dUMP biosynthesis; dUMP from dCTP: step 1/1. Bifunctional enzyme that catalyzes both the deamination of dCTP to dUTP and the hydrolysis of dUTP to dUMP without releasing the toxic dUTP intermediate. The chain is dCTP deaminase, dUMP-forming from Acidothermus cellulolyticus (strain ATCC 43068 / DSM 8971 / 11B).